The primary structure comprises 176 residues: PKHD-type hydroxylase Mfla_0096 (176 aa).

The 70-residue stretch at 78 to 147 folds into the Fe2OG dioxygenase domain; it reads KVFPPLFNRY…NQIARGTYGA (70 aa).

Fe(2+) serves as cofactor. It depends on L-ascorbate as a cofactor.

The chain is PKHD-type hydroxylase Mfla_0096 from Methylobacillus flagellatus (strain ATCC 51484 / DSM 6875 / VKM B-1610 / KT).